The sequence spans 212 residues: ATP-dependent dethiobiotin synthetase BioD (212 aa).

Position 13–18 (13–18 (GIGKTV)) interacts with ATP. Thr-17 serves as a coordination point for Mg(2+). Lys-33 is an active-site residue. Ser-37 is a substrate binding site. Glu-100 lines the Mg(2+) pocket. Residues 100–103 (EGAG) and 184–186 (PLL) contribute to the ATP site.

Belongs to the dethiobiotin synthetase family. In terms of assembly, homodimer. Requires Mg(2+) as cofactor.

The protein localises to the cytoplasm. The enzyme catalyses (7R,8S)-7,8-diammoniononanoate + CO2 + ATP = (4R,5S)-dethiobiotin + ADP + phosphate + 3 H(+). It participates in cofactor biosynthesis; biotin biosynthesis; biotin from 7,8-diaminononanoate: step 1/2. In terms of biological role, catalyzes a mechanistically unusual reaction, the ATP-dependent insertion of CO2 between the N7 and N8 nitrogen atoms of 7,8-diaminopelargonic acid (DAPA, also called 7,8-diammoniononanoate) to form a ureido ring. The chain is ATP-dependent dethiobiotin synthetase BioD from Brucella melitensis biotype 2 (strain ATCC 23457).